We begin with the raw amino-acid sequence, 319 residues long: MLDKHGRKINYLRVSVTDRCNLRCVYCMPPEGIVKKEHDNIMRYEEIFKVVKSASLLGVNKIRFTGGEPLILKDIDKLIYNTSKINSIKDIAMTTNAILLEDMVEELKKAGLKRVNISLDSLKEDRFKSITRGGDINKVFKSIEKSLSIGMKPIKINTVIMKGINDDEIDDFMNLTKKYPISVRFIELMPIGEGRKLYKDGYISSEEIISKHSDLIPVETDKSSTALLYKFKESKENIGFISPMSCKFCSGCNRVRLTSEGTLKPCLHSEKEVDLKNYVDSSQALLSKINETIYNKPLEHHMIEEKESKSKKMMYQIGG.

The Radical SAM core domain occupies 4 to 227 (KHGRKINYLR…VETDKSSTAL (224 aa)). Residue arginine 13 coordinates GTP. The [4Fe-4S] cluster site is built by cysteine 20 and cysteine 24. Position 26 (tyrosine 26) interacts with S-adenosyl-L-methionine. A [4Fe-4S] cluster-binding site is contributed by cysteine 27. Arginine 63 is a GTP binding site. Glycine 67 contributes to the S-adenosyl-L-methionine binding site. Threonine 94 is a GTP binding site. Serine 118 is an S-adenosyl-L-methionine binding site. Residue lysine 155 coordinates GTP. Methionine 189 contributes to the S-adenosyl-L-methionine binding site. Cysteine 249 and cysteine 252 together coordinate [4Fe-4S] cluster. 254 to 256 (RVR) serves as a coordination point for GTP. Residue cysteine 266 participates in [4Fe-4S] cluster binding.

Belongs to the radical SAM superfamily. MoaA family. As to quaternary structure, monomer and homodimer. It depends on [4Fe-4S] cluster as a cofactor.

The enzyme catalyses GTP + AH2 + S-adenosyl-L-methionine = (8S)-3',8-cyclo-7,8-dihydroguanosine 5'-triphosphate + 5'-deoxyadenosine + L-methionine + A + H(+). Its pathway is cofactor biosynthesis; molybdopterin biosynthesis. Catalyzes the cyclization of GTP to (8S)-3',8-cyclo-7,8-dihydroguanosine 5'-triphosphate. The polypeptide is GTP 3',8-cyclase (Clostridium botulinum (strain Langeland / NCTC 10281 / Type F)).